The following is a 425-amino-acid chain: Meiotic recombination protein spo-11 (425 aa).

Residues 1-38 (MYEYSFNPNIDHEPGSVESQQSTIYSDSDDSDDSFLDD) form a disordered region. One can recognise a Topo IIA-type catalytic domain in the interval 15 to 158 (GSVESQQSTI…LNILSCGRGI (144 aa)). A compositionally biased stretch (acidic residues) spans 27–38 (DSDDSDDSFLDD). Tyr-119 (O-(5'-phospho-DNA)-tyrosine intermediate) is an active-site residue. Mg(2+) is bound by residues Glu-202 and Asp-255.

Belongs to the TOP6A family. It depends on Mg(2+) as a cofactor.

Its subcellular location is the nucleus. The catalysed reaction is ATP-dependent breakage, passage and rejoining of double-stranded DNA.. Required for meiotic recombination. Mediates DNA cleavage that forms the double-strand breaks (DSB) that initiate meiotic recombination. The protein is Meiotic recombination protein spo-11 (spo-11) of Caenorhabditis elegans.